We begin with the raw amino-acid sequence, 172 residues long: 3-phenylpropionate/cinnamic acid dioxygenase subunit beta (172 aa).

It belongs to the bacterial ring-hydroxylating dioxygenase beta subunit family. This dioxygenase system consists of four proteins: the two subunits of the hydroxylase component (HcaE and HcaF), a ferredoxin (HcaC) and a ferredoxin reductase (HcaD).

The catalysed reaction is 3-phenylpropanoate + NADH + O2 + H(+) = 3-(cis-5,6-dihydroxycyclohexa-1,3-dien-1-yl)propanoate + NAD(+). It carries out the reaction (E)-cinnamate + NADH + O2 + H(+) = (2E)-3-(cis-5,6-dihydroxycyclohexa-1,3-dien-1-yl)prop-2-enoate + NAD(+). The protein operates within aromatic compound metabolism; 3-phenylpropanoate degradation. Its function is as follows. Part of the multicomponent 3-phenylpropionate dioxygenase. Converts 3-phenylpropionic acid (PP) and cinnamic acid (CI) into 3-phenylpropionate-dihydrodiol (PP-dihydrodiol) and cinnamic acid-dihydrodiol (CI-dihydrodiol), respectively. This chain is 3-phenylpropionate/cinnamic acid dioxygenase subunit beta, found in Escherichia coli O7:K1 (strain IAI39 / ExPEC).